The following is a 510-amino-acid chain: Beta-glucosidase 12 (510 aa).

Residues 1–24 form the signal peptide; it reads MAAAGAMPGGLLLTFLLLAVVASG. Q53 lines the a beta-D-glucoside pocket. N122 carries an N-linked (GlcNAc...) asparagine glycan. A beta-D-glucoside is bound by residues H157 and 202–203; that span reads NE. The active-site Proton donor is E203. Disulfide bonds link C208/C243 and C222/C230. N229 carries N-linked (GlcNAc...) asparagine glycosylation. Y346 is an a beta-D-glucoside binding site. 2 N-linked (GlcNAc...) asparagine glycosylation sites follow: N361 and N371. E417 contacts a beta-D-glucoside. E417 functions as the Nucleophile in the catalytic mechanism. Residue N425 is glycosylated (N-linked (GlcNAc...) asparagine). Residues W466, 473–474, and F482 contribute to the a beta-D-glucoside site; that span reads EW.

This sequence belongs to the glycosyl hydrolase 1 family.

It localises to the secreted. It carries out the reaction Hydrolysis of terminal, non-reducing beta-D-glucosyl residues with release of beta-D-glucose.. Hydrolyzes p-nitrophenyl beta-D-glucoside, p-nitrophenyl beta-D-galactoside, p-nitrophenyl beta-D-xyloside, p-nitrophenyl beta-D-fucoside, p-nitrophenyl beta-L-arabinoside, cello-oligosaccharides and laminaribiose. This chain is Beta-glucosidase 12, found in Oryza sativa subsp. indica (Rice).